The primary structure comprises 89 residues: Probable Fe(2+)-trafficking protein (89 aa).

The protein belongs to the Fe(2+)-trafficking protein family.

Functionally, could be a mediator in iron transactions between iron acquisition and iron-requiring processes, such as synthesis and/or repair of Fe-S clusters in biosynthetic enzymes. In Acinetobacter baumannii (strain AB0057), this protein is Probable Fe(2+)-trafficking protein.